The primary structure comprises 359 residues: Nicotinate-nucleotide--dimethylbenzimidazole phosphoribosyltransferase (359 aa).

Catalysis depends on Glu-318, which acts as the Proton acceptor.

It belongs to the CobT family. In terms of assembly, homodimer.

It carries out the reaction 5,6-dimethylbenzimidazole + nicotinate beta-D-ribonucleotide = alpha-ribazole 5'-phosphate + nicotinate + H(+). Its pathway is nucleoside biosynthesis; alpha-ribazole biosynthesis; alpha-ribazole from 5,6-dimethylbenzimidazole: step 1/2. Its function is as follows. Catalyzes the synthesis of alpha-ribazole-5'-phosphate from nicotinate mononucleotide (NAMN) and 5,6-dimethylbenzimidazole (DMB). The polypeptide is Nicotinate-nucleotide--dimethylbenzimidazole phosphoribosyltransferase (Shigella sonnei (strain Ss046)).